A 373-amino-acid polypeptide reads, in one-letter code: GDP-mannose 4,6-dehydratase (373 aa).

NADP(+) contacts are provided by residues 10 to 15 (GITGQD), 65 to 66 (DL), 87 to 91 (LGAQS), and Tyr-102. Residue Thr-134 is part of the active site. Active-site nucleophile residues include Glu-136 and Tyr-158. The NADP(+) site is built by Lys-162, His-188, and Arg-193.

This sequence belongs to the NAD(P)-dependent epimerase/dehydratase family. GDP-mannose 4,6-dehydratase subfamily. The cofactor is NADP(+).

The enzyme catalyses GDP-alpha-D-mannose = GDP-4-dehydro-alpha-D-rhamnose + H2O. Its function is as follows. Catalyzes the conversion of GDP-D-mannose to GDP-4-dehydro-6-deoxy-D-mannose. In Vibrio cholerae serotype O1 (strain ATCC 39315 / El Tor Inaba N16961), this protein is GDP-mannose 4,6-dehydratase.